Reading from the N-terminus, the 358-residue chain is DNA polymerase IV (358 aa).

The UmuC domain maps to 4-185 (IIHIDMDCYF…LPLIKIPGVG (182 aa)). Residues aspartate 8 and aspartate 103 each coordinate Mg(2+). Glutamate 104 is a catalytic residue.

It belongs to the DNA polymerase type-Y family. As to quaternary structure, monomer. Mg(2+) serves as cofactor.

The protein resides in the cytoplasm. The enzyme catalyses DNA(n) + a 2'-deoxyribonucleoside 5'-triphosphate = DNA(n+1) + diphosphate. Poorly processive, error-prone DNA polymerase involved in untargeted mutagenesis. Copies undamaged DNA at stalled replication forks, which arise in vivo from mismatched or misaligned primer ends. These misaligned primers can be extended by PolIV. Exhibits no 3'-5' exonuclease (proofreading) activity. May be involved in translesional synthesis, in conjunction with the beta clamp from PolIII. This is DNA polymerase IV from Shewanella denitrificans (strain OS217 / ATCC BAA-1090 / DSM 15013).